The following is a 205-amino-acid chain: Small ribosomal subunit protein uS5 (205 aa).

The S5 DRBM domain occupies 49–112 (LVDEVLCIDM…TNAKLNIVKV (64 aa)).

The protein belongs to the universal ribosomal protein uS5 family. Part of the 30S ribosomal subunit. Contacts protein S4.

In terms of biological role, with S4 and S12 plays an important role in translational accuracy. The sequence is that of Small ribosomal subunit protein uS5 from Methanocorpusculum labreanum (strain ATCC 43576 / DSM 4855 / Z).